A 597-amino-acid polypeptide reads, in one-letter code: Elongation factor 4 (597 aa).

The tr-type G domain occupies 2 to 184 (KNIRNFSIIA…SIVEHLPAPE (183 aa)). GTP-binding positions include 14 to 19 (DHGKST) and 131 to 134 (NKID).

Belongs to the TRAFAC class translation factor GTPase superfamily. Classic translation factor GTPase family. LepA subfamily.

It is found in the cell inner membrane. The catalysed reaction is GTP + H2O = GDP + phosphate + H(+). Required for accurate and efficient protein synthesis under certain stress conditions. May act as a fidelity factor of the translation reaction, by catalyzing a one-codon backward translocation of tRNAs on improperly translocated ribosomes. Back-translocation proceeds from a post-translocation (POST) complex to a pre-translocation (PRE) complex, thus giving elongation factor G a second chance to translocate the tRNAs correctly. Binds to ribosomes in a GTP-dependent manner. This Desulfotalea psychrophila (strain LSv54 / DSM 12343) protein is Elongation factor 4.